Here is a 200-residue protein sequence, read N- to C-terminus: Large ribosomal subunit protein uL13 (200 aa).

It belongs to the universal ribosomal protein uL13 family. Component of the large ribosomal subunit. Mature ribosomes consist of a small (40S) and a large (60S) subunit. The 40S subunit contains about 32 different proteins and 1 molecule of RNA (18S). The 60S subunit contains 45 different proteins and 3 molecules of RNA (25S, 5.8S and 5S).

The protein resides in the cytoplasm. Its function is as follows. Component of the ribosome, a large ribonucleoprotein complex responsible for the synthesis of proteins in the cell. The small ribosomal subunit (SSU) binds messenger RNAs (mRNAs) and translates the encoded message by selecting cognate aminoacyl-transfer RNA (tRNA) molecules. The large subunit (LSU) contains the ribosomal catalytic site termed the peptidyl transferase center (PTC), which catalyzes the formation of peptide bonds, thereby polymerizing the amino acids delivered by tRNAs into a polypeptide chain. The nascent polypeptides leave the ribosome through a tunnel in the LSU and interact with protein factors that function in enzymatic processing, targeting, and the membrane insertion of nascent chains at the exit of the ribosomal tunnel. The protein is Large ribosomal subunit protein uL13 of Candida albicans (strain SC5314 / ATCC MYA-2876) (Yeast).